A 285-amino-acid chain; its full sequence is Nudix hydrolase 15, mitochondrial (285 aa).

Residues 1–23 constitute a mitochondrion transit peptide; that stretch reads MFLLYRRLPSFARTTTTTLLCKS. Met24 carries the post-translational modification N-acetylmethionine. 2 disordered regions span residues 51-72 and 129-152; these read RQYKPPPSSSFDDSEEMQTDQE and THSGEVSLPGGKAEEDDKDDGMTA. The region spanning 99–255 is the Nudix hydrolase domain; the sequence is PKRAAVLICL…DKDYMIWGLT (157 aa). Positions 140 to 161 match the Nudix box motif; that stretch reads KAEEDDKDDGMTATREAEEEIG. Mg(2+) is bound by residues Glu155 and Glu159.

This sequence belongs to the Nudix hydrolase family. It depends on Mg(2+) as a cofactor. The cofactor is Mn(2+). In terms of tissue distribution, expressed in roots, leaves, stems and inflorescences.

It is found in the mitochondrion. Functionally, coenzyme A diphosphatase which mediates the cleavage of oxidized CoA. Can use malonyl-CoA, hexanoyl-CoA, lauroyl-CoA, myristoyl-CoA and palmitoyl-CoA as substrates, but not isobutyryl-CoA or propionyl-CoA. The chain is Nudix hydrolase 15, mitochondrial (NUDT15) from Arabidopsis thaliana (Mouse-ear cress).